Consider the following 1059-residue polypeptide: Disks large-associated protein 2 (1059 aa).

Disordered stretches follow at residues 31 to 54 (GEPE…PAEE) and 245 to 311 (KSHS…SDST). Positions 245–261 (KSHSLEGSSKSNINGTK) are enriched in polar residues. The span at 262–271 (SDSRVDDHHQ) shows a compositional bias: basic and acidic residues. A compositionally biased stretch (basic residues) spans 272–285 (SHLSKHSKRSKSKE). Residues Ser302, Ser308, Ser390, and Ser456 each carry the phosphoserine modification. Residues 613–669 (YKKTPPPVPPRTTSKPLISVTAQSSTESTQDAYQDSRAQRMSPWPQDSRGGLYNSMD) form a disordered region. Residues 632–645 (VTAQSSTESTQDAY) show a composition bias toward polar residues. A phosphoserine mark is found at Ser667, Ser670, Ser673, and Ser720. A disordered region spans residues 723 to 756 (VQDSEFPDHQPYPRSDVETATDSDTESRGLREYH). Phosphothreonine is present on Thr743. The residue at position 745 (Ser745) is a Phosphoserine. The segment covering 747–756 (TESRGLREYH) has biased composition (basic and acidic residues). Phosphoserine occurs at positions 776, 811, 983, and 1012. Positions 985-1025 (ERKEERKIPPPIPKKPPKGKFPITREKSLDLPDRQRQEARR) are disordered. Residues 1007 to 1025 (ITREKSLDLPDRQRQEARR) are compositionally biased toward basic and acidic residues.

The protein belongs to the SAPAP family. Interacts with DLG4/PSD-95. Expressed in various brain areas.

Its subcellular location is the cell membrane. The protein localises to the postsynaptic density. It is found in the synapse. Functionally, may play a role in the molecular organization of synapses and neuronal cell signaling. Could be an adapter protein linking ion channel to the subsynaptic cytoskeleton. May induce enrichment of PSD-95/SAP90 at the plasma membrane. This is Disks large-associated protein 2 from Mus musculus (Mouse).